The chain runs to 725 residues: mRNA decay activator protein ZFP36L3 (725 aa).

A compositionally biased stretch (low complexity) spans 1 to 25; sequence MANNNLNRPLNTNVADSSNSSSTPG. The interval 1-119 is disordered; sequence MANNNLNRPL…KVSGSSSLAT (119 aa). Polar residues-rich tracts occupy residues 42–72 and 100–119; these read APSSSASSLTEDCSSSFARDLNSYNNGQSGA and HSLQQKPKPQKVSGSSSLAT. C3H1-type zinc fingers lie at residues 122 to 150 and 160 to 188; these read RYKTELCRPFEESGICKYGHKCQFAHGYR and KYKTEPCRTFHSVGFCPYGTRCHFIHNQP. The segment at 193 to 711 is necessary for cytoplasmic localization; the sequence is VLSESTLEEP…ESEFDNTNSS (519 aa). The disordered stretch occupies residues 276–310; sequence STTAHDADKDPDKDADKDPSNNSANDALAFPQEPG. A compositionally biased stretch (basic and acidic residues) spans 280 to 294; sequence HDADKDPDKDADKDP. The next 4 membrane-spanning stretches (helical) occupy residues 380–400, 420–440, 441–461, and 468–488; these read LAPAAALTPAAALAPGAAMAL, AALALGAAMAAGAALAPGAAM, APGAAMATGAALAFGAAMATG, and AAMALGAAMATGAALAPGAAV. The disordered stretch occupies residues 686-709; sequence DEDDFLRRSSSSSSLNESEFDNTN. The span at 693–702 shows a compositional bias: low complexity; that stretch reads RSSSSSSLNE.

In terms of tissue distribution, expressed in placenta and extraembryonic tissues (at protein level). Not detected in embryos and fetus.

The protein localises to the cytoplasm. The protein resides in the membrane. Placenta-specific zinc-finger RNA-binding protein that destabilizes cytoplasmic AU-rich element (ARE)-containing mRNA transcripts by promoting their poly(A) tail removal or deadenylation, and hence provide a mechanism for attenuating protein synthesis. Binds to the 3'-UTR ARE of placental target mRNAs, such as TNF, HBEGF and LIPG. Involved in placental expression of many genes important for normal placental physiology. This Mus musculus (Mouse) protein is mRNA decay activator protein ZFP36L3.